The chain runs to 2103 residues: uncharacterized protein (2103 aa).

A compositionally biased stretch (low complexity) spans 1–12; the sequence is MSVPGTPGAMEP. The interval 1–61 is disordered; sequence MSVPGTPGAM…DADDQEEEME (61 aa). A compositionally biased stretch (acidic residues) spans 51 to 61; the sequence is EDADDQEEEME. Residues 77–196 form the Bromo domain; the sequence is YELQQGYRIL…MMLEQKLALL (120 aa). Disordered regions lie at residues 730 to 750, 853 to 881, 933 to 956, 1224 to 1244, and 1770 to 1817; these read AKHKKHKSGKKSVSKKAITKK, NRELWTTDEGEGDLGKDSPKGEISKSIDS, QSKQTDYVDDSTKELSPRKKAKLS, SASPTISSTGQPLSSTTTLNG, and GATR…STSP. The segment covering 865-877 has biased composition (basic and acidic residues); that stretch reads DLGKDSPKGEISK. Positions 1224–1234 are enriched in polar residues; sequence SASPTISSTGQ. Positions 1235–1244 are enriched in low complexity; the sequence is PLSSTTTLNG. Residues 1773–1794 show a composition bias toward polar residues; that stretch reads RSVSISKRQSRTSLQFHSPGIS. Low complexity predominate over residues 1795–1808; sequence TTVPTNVNTNKPQT.

The protein resides in the nucleus. This is an uncharacterized protein from Homo sapiens (Human).